The primary structure comprises 137 residues: GEL complex subunit OPTI (137 aa).

Topologically, residues 1–44 (MSGGRRKEEPPQPQLANGALKVSVWSKVLRSDAAWEDKDEFLDV) are cytoplasmic. The chain crosses the membrane as a helical span at residues 45–65 (IYWFRQIIAVVLGVIWGVLPL). Position 66 (Arg-66) is a topological domain, lumenal. A helical transmembrane segment spans residues 67–84 (GFLGIAGFCLINAGVLYL). Topologically, residues 85 to 103 (YFSNYLQIDEEEYGGTWEL) are cytoplasmic. A helical membrane pass occupies residues 104-127 (TKEGFMTSFALFMVCVADSFTTGH). Over 128-137 (LDHLLHCHPL) the chain is Lumenal.

It belongs to the EMC6 family. In terms of assembly, component of the GET- and EMC-like (GEL) complex, composed of RAB5IF/OPTI and TMCO1. The GEL complex is part of the multi-pass translocon (MPT) complex, composed of three subcomplexes, the GEL complex (composed of RAB5IF/OPTI and TMCO1), the BOS complex (composed of NCLN/Nicalin, NOMO and TMEM147) and the PAT complex (composed of WDR83OS/Asterix and CCDC47). The MPT complex associates with the SEC61 complex. Interacts with NDUFS3, NDUFA4, NDUFV1, NDUFA9 and NDUFS8 of the mitochondrial membrane respiratory chain NADH dehydrogenase (Complex I). Interacts with UQCRC2 of the ubiquinol-cytochrome c reductase complex (Complex III). Interacts with COX5A and COX7C of the cytochrome c oxidase complex (Complex IV). As to expression, expressed in embryonic stem cells and differentiated neuronal cells.

The protein resides in the endoplasmic reticulum membrane. The protein localises to the mitochondrion inner membrane. Functionally, component of the multi-pass translocon (MPT) complex that mediates insertion of multi-pass membrane proteins into the lipid bilayer of membranes. The MPT complex takes over after the SEC61 complex: following membrane insertion of the first few transmembrane segments of proteins by the SEC61 complex, the MPT complex occludes the lateral gate of the SEC61 complex to promote insertion of subsequent transmembrane regions. Within the MPT complex, the GEL subcomplex may mediate insertion of transmembrane regions into the membrane. In addition to its role in multi-pass membrane insertion, RAB5IF/OPTI also acts as an assembly factor for mitochondrial respiratory complexes. In Homo sapiens (Human), this protein is GEL complex subunit OPTI.